A 164-amino-acid chain; its full sequence is Aspartic proteinase nepenthesin-1 (164 aa).

Residues tyrosine 17–alanine 164 enclose the Peptidase A1 domain. Residue aspartate 35 is part of the active site. N-linked (GlcNAc...) asparagine glycosylation is present at asparagine 93.

Belongs to the peptidase A1 family. In terms of tissue distribution, parenchymal cells surrounding the secretory glands.

The protein localises to the secreted. The catalysed reaction is Similar to pepsin, but also cleaves on either side of Asp and at Lys-|-Arg.. Its activity is regulated as follows. Inhibited by pepstatin and by diazoacetyl-D,L-norleucine methyl ester (DAN) in the presence of Cu(2+) ions. Extracellular proteinase found in the pitcher fluid of carnivorous plants. Digest prey for nitrogen uptake. This is Aspartic proteinase nepenthesin-1 from Nepenthes distillatoria (Pitcher plant).